We begin with the raw amino-acid sequence, 235 residues long: Large ribosomal subunit protein uL1 (235 aa).

This sequence belongs to the universal ribosomal protein uL1 family. Part of the 50S ribosomal subunit.

Its function is as follows. Binds directly to 23S rRNA. The L1 stalk is quite mobile in the ribosome, and is involved in E site tRNA release. Functionally, protein L1 is also a translational repressor protein, it controls the translation of the L11 operon by binding to its mRNA. The chain is Large ribosomal subunit protein uL1 from Parasynechococcus marenigrum (strain WH8102).